The primary structure comprises 348 residues: Rhodopsin (348 aa).

Met-1 is subject to N-acetylmethionine. The Extracellular segment spans residues 1-36; that stretch reads MNGTEGPNFYVPFSNVTGVVRSPFEQPQYYLAEPWQ. 2 N-linked (GlcNAc...) asparagine glycosylation sites follow: Asn-2 and Asn-15. Residues 37–61 form a helical membrane-spanning segment; the sequence is FSMLAAYMFLLIVLGFPINFLTLYV. Topologically, residues 62 to 73 are cytoplasmic; it reads TVQHKKLRTPLN. The helical transmembrane segment at 74-96 threads the bilayer; that stretch reads YILLNLAVADLFMVFGGFTTTLY. Topologically, residues 97 to 110 are extracellular; the sequence is TSLHGYFVFGPTGC. Cys-110 and Cys-187 are disulfide-bonded. A helical membrane pass occupies residues 111-133; it reads NLEGFFATLGGEIALWSLVVLAI. Positions 134–136 match the 'Ionic lock' involved in activated form stabilization motif; sequence ERY. Residues 134 to 152 are Cytoplasmic-facing; that stretch reads ERYVVVCKPMSNFRFGENH. Residues 153-173 form a helical membrane-spanning segment; it reads AIMGVVFTWIMALACAAPPLV. The Extracellular segment spans residues 174–202; that stretch reads GWSRYIPEGMQCSCGIDYYTLKPEVNNES. Glu-201 provides a ligand contact to Zn(2+). Residues 203–224 traverse the membrane as a helical segment; it reads FVIYMFVVHFTIPMIVIFFCYG. Residues 225-252 lie on the Cytoplasmic side of the membrane; sequence QLVFTVKEAAAQQQESATTQKAEKEVTR. Residues 253-274 traverse the membrane as a helical segment; the sequence is MVIIMVIFFLICWLPYASVAFY. At 275 to 286 the chain is on the extracellular side; it reads IFTHQGSNFGPI. Residue Gln-279 participates in Zn(2+) binding. The chain crosses the membrane as a helical span at residues 287–308; it reads FMTLPAFFAKSSSIYNPVIYIM. Lys-296 is subject to N6-(retinylidene)lysine. Residues 309 to 348 lie on the Cytoplasmic side of the membrane; it reads LNKQFRNCMLTTLCCGKNPLGDDDASATASKTETSQVAPA. 2 S-palmitoyl cysteine lipidation sites follow: Cys-322 and Cys-323. Positions 330 to 348 are interaction with SAG; sequence DDDASATASKTETSQVAPA. Ser-334 is modified (phosphoserine). The residue at position 336 (Thr-336) is a Phosphothreonine. At Ser-338 the chain carries Phosphoserine. 2 positions are modified to phosphothreonine: Thr-340 and Thr-342. Position 343 is a phosphoserine (Ser-343).

The protein belongs to the G-protein coupled receptor 1 family. Opsin subfamily. In terms of assembly, homodimer. May form a complex composed of RHO, GRK1 and RCVRN in a Ca(2+)-dependent manner; RCVRN prevents the interaction between GRK1 and RHO. Interacts with GRK1. Interacts (phosphorylated form) with SAG. Interacts with GNAT1. Interacts with GNAT3. SAG and G-proteins compete for a common binding site. Interacts with PRCD; the interaction promotes PRCD stability. Forms a complex with ASAP1 and ARF4. Forms a complex with ASAP1, RAB11A, Rabin8/RAB3IP, ARF4 and RAB11FIP3; the complex regulates Golgi-to-cilia rhodopsin/RHO transport in photoreceptors. Post-translationally, phosphorylated on some or all of the serine and threonine residues present in the C-terminal region. Contains one covalently linked retinal chromophore. Upon light absorption, the covalently bound 11-cis-retinal is converted to all-trans-retinal. After hydrolysis of the Schiff base and release of the covalently bound all-trans-retinal, active rhodopsin is regenerated by binding of a fresh molecule of 11-cis-retinal. Rod-shaped photoreceptor cells in the retina (at protein level).

The protein localises to the membrane. Its subcellular location is the cell projection. It localises to the cilium. The protein resides in the photoreceptor outer segment. In terms of biological role, photoreceptor required for image-forming vision at low light intensity. Required for photoreceptor cell viability after birth. Light-induced isomerization of 11-cis to all-trans retinal triggers a conformational change that activates signaling via G-proteins. Subsequent receptor phosphorylation mediates displacement of the bound G-protein alpha subunit by the arrestin SAG and terminates signaling. The sequence is that of Rhodopsin (Rho) from Mus musculus (Mouse).